We begin with the raw amino-acid sequence, 263 residues long: Imidazole glycerol phosphate synthase subunit HisF (263 aa).

Active-site residues include aspartate 22 and aspartate 141.

It belongs to the HisA/HisF family. In terms of assembly, heterodimer of HisH and HisF.

The protein localises to the cytoplasm. It carries out the reaction 5-[(5-phospho-1-deoxy-D-ribulos-1-ylimino)methylamino]-1-(5-phospho-beta-D-ribosyl)imidazole-4-carboxamide + L-glutamine = D-erythro-1-(imidazol-4-yl)glycerol 3-phosphate + 5-amino-1-(5-phospho-beta-D-ribosyl)imidazole-4-carboxamide + L-glutamate + H(+). Its pathway is amino-acid biosynthesis; L-histidine biosynthesis; L-histidine from 5-phospho-alpha-D-ribose 1-diphosphate: step 5/9. IGPS catalyzes the conversion of PRFAR and glutamine to IGP, AICAR and glutamate. The HisF subunit catalyzes the cyclization activity that produces IGP and AICAR from PRFAR using the ammonia provided by the HisH subunit. This Clavibacter michiganensis subsp. michiganensis (strain NCPPB 382) protein is Imidazole glycerol phosphate synthase subunit HisF.